The sequence spans 319 residues: Type II secretion system protein C 2 (319 aa).

The Cytoplasmic portion of the chain corresponds to 1 to 42; sequence MARVVFRDARIYLIQWLTKIRHTLNQRQSLNTDKEHLRKIVR. Residues 43 to 65 form a helical membrane-spanning segment; sequence GMFWLMLLIISAKVAHSLWRYFS. Topologically, residues 66 to 319 are periplasmic; the sequence is FSAEYTAVSP…ARHDISIALR (254 aa).

It belongs to the GSP C family. In terms of assembly, interacts with outer cell membrane protein GspD2 in the periplasm.

The protein localises to the cell inner membrane. Involved in a type II secretion system (T2SS, formerly general secretion pathway, GSP) for the export of folded proteins across the outer membrane. The sequence is that of Type II secretion system protein C 2 (gspC2) from Escherichia coli O78:H11 (strain H10407 / ETEC).